We begin with the raw amino-acid sequence, 103 residues long: Protamine-3 (103 aa).

The segment at 1–103 (MGSRCAKLNT…QSPEPKRTPS (103 aa)) is disordered. A compositionally biased stretch (low complexity) spans 10-21 (TGQSPGHSPGHS). The span at 50 to 66 (GEEEEEEEEEGEEEEKE) shows a compositional bias: acidic residues. A compositionally biased stretch (basic and acidic residues) spans 78-90 (EPERQEEGHKDNA). Phosphoserine is present on S95.

The protein belongs to the protamine P3 family.

It is found in the nucleus. The protein localises to the chromosome. Its function is as follows. Protamines substitute for histones in the chromatin of sperm during the haploid phase of spermatogenesis. They compact sperm DNA into a highly condensed, stable and inactive complex. In Homo sapiens (Human), this protein is Protamine-3 (PRM3).